The chain runs to 858 residues: Bifunctional uridylyltransferase/uridylyl-removing enzyme (858 aa).

The tract at residues 1 to 324 (MSASVAEPPP…PATSGVTRVL (324 aa)) is uridylyltransferase. The segment at 325 to 681 (SPGRFVEKQG…ARPSPVGDAL (357 aa)) is uridylyl-removing. One can recognise an HD domain in the interval 443-565 (VDQHILMVLR…VGSERRLTAL (123 aa)). ACT domains lie at 682 to 761 (QVLV…PEPS) and 790 to 858 (ILSV…AIAV).

It belongs to the GlnD family. It depends on Mg(2+) as a cofactor.

It carries out the reaction [protein-PII]-L-tyrosine + UTP = [protein-PII]-uridylyl-L-tyrosine + diphosphate. The enzyme catalyses [protein-PII]-uridylyl-L-tyrosine + H2O = [protein-PII]-L-tyrosine + UMP + H(+). Its activity is regulated as follows. Uridylyltransferase (UTase) activity is inhibited by glutamine, while glutamine activates uridylyl-removing (UR) activity. Modifies, by uridylylation and deuridylylation, the PII regulatory proteins (GlnB and homologs), in response to the nitrogen status of the cell that GlnD senses through the glutamine level. Under low glutamine levels, catalyzes the conversion of the PII proteins and UTP to PII-UMP and PPi, while under higher glutamine levels, GlnD hydrolyzes PII-UMP to PII and UMP (deuridylylation). Thus, controls uridylylation state and activity of the PII proteins, and plays an important role in the regulation of nitrogen assimilation and metabolism. This Burkholderia mallei (strain NCTC 10247) protein is Bifunctional uridylyltransferase/uridylyl-removing enzyme.